The chain runs to 329 residues: Malate dehydrogenase (329 aa).

Gly12 to Gly18 serves as a coordination point for NAD(+). The substrate site is built by Arg95 and Arg101. NAD(+)-binding positions include Asn108, Gln115, and Val132–Asn134. Substrate contacts are provided by Asn134 and Arg165. The active-site Proton acceptor is His190.

This sequence belongs to the LDH/MDH superfamily. MDH type 2 family.

The enzyme catalyses (S)-malate + NAD(+) = oxaloacetate + NADH + H(+). In terms of biological role, catalyzes the reversible oxidation of malate to oxaloacetate. In Bordetella avium (strain 197N), this protein is Malate dehydrogenase.